Here is a 397-residue protein sequence, read N- to C-terminus: Ribosomal RNA large subunit methyltransferase I (397 aa).

The PUA domain maps to 2-80 (AIRIKLKPGR…KEEAIDADFF (79 aa)).

The protein belongs to the methyltransferase superfamily. RlmI family.

It localises to the cytoplasm. The enzyme catalyses cytidine(1962) in 23S rRNA + S-adenosyl-L-methionine = 5-methylcytidine(1962) in 23S rRNA + S-adenosyl-L-homocysteine + H(+). Its function is as follows. Specifically methylates the cytosine at position 1962 (m5C1962) of 23S rRNA. The protein is Ribosomal RNA large subunit methyltransferase I of Shewanella denitrificans (strain OS217 / ATCC BAA-1090 / DSM 15013).